The sequence spans 487 residues: Glutamate--tRNA ligase 2 (487 aa).

The short motif at 24 to 34 (PSPTGFLHIGG) is the 'HIGH' region element. Residues 258–262 (KLSKR) carry the 'KMSKS' region motif. Lysine 261 lines the ATP pocket.

Belongs to the class-I aminoacyl-tRNA synthetase family. Glutamate--tRNA ligase type 1 subfamily. In terms of assembly, monomer.

Its subcellular location is the cytoplasm. The enzyme catalyses tRNA(Glu) + L-glutamate + ATP = L-glutamyl-tRNA(Glu) + AMP + diphosphate. In terms of biological role, catalyzes the attachment of glutamate to tRNA(Glu) in a two-step reaction: glutamate is first activated by ATP to form Glu-AMP and then transferred to the acceptor end of tRNA(Glu). This chain is Glutamate--tRNA ligase 2, found in Novosphingobium aromaticivorans (strain ATCC 700278 / DSM 12444 / CCUG 56034 / CIP 105152 / NBRC 16084 / F199).